A 212-amino-acid polypeptide reads, in one-letter code: Uridine kinase (212 aa).

An ATP-binding site is contributed by Gly-13 to Thr-20.

It belongs to the uridine kinase family.

Its subcellular location is the cytoplasm. It catalyses the reaction uridine + ATP = UMP + ADP + H(+). The enzyme catalyses cytidine + ATP = CMP + ADP + H(+). It functions in the pathway pyrimidine metabolism; CTP biosynthesis via salvage pathway; CTP from cytidine: step 1/3. Its pathway is pyrimidine metabolism; UMP biosynthesis via salvage pathway; UMP from uridine: step 1/1. In Bacillus cereus (strain G9842), this protein is Uridine kinase.